A 600-amino-acid chain; its full sequence is UvrABC system protein C (600 aa).

The GIY-YIG domain maps to 15 to 92 (DKPGCYLMKD…IKKYQPYYNV (78 aa)). In terms of domain architecture, UVR spans 197–232 (SQVKQDLTEKMTQASMNLEFERAAEFRDQLKYIEQT).

This sequence belongs to the UvrC family. Interacts with UvrB in an incision complex.

It localises to the cytoplasm. Functionally, the UvrABC repair system catalyzes the recognition and processing of DNA lesions. UvrC both incises the 5' and 3' sides of the lesion. The N-terminal half is responsible for the 3' incision and the C-terminal half is responsible for the 5' incision. This is UvrABC system protein C from Lactobacillus gasseri (strain ATCC 33323 / DSM 20243 / BCRC 14619 / CIP 102991 / JCM 1131 / KCTC 3163 / NCIMB 11718 / NCTC 13722 / AM63).